The chain runs to 287 residues: Ribosomal RNA small subunit methyltransferase A (287 aa).

S-adenosyl-L-methionine contacts are provided by N28, L30, G55, E77, D103, and N123.

It belongs to the class I-like SAM-binding methyltransferase superfamily. rRNA adenine N(6)-methyltransferase family. RsmA subfamily.

The protein localises to the cytoplasm. It carries out the reaction adenosine(1518)/adenosine(1519) in 16S rRNA + 4 S-adenosyl-L-methionine = N(6)-dimethyladenosine(1518)/N(6)-dimethyladenosine(1519) in 16S rRNA + 4 S-adenosyl-L-homocysteine + 4 H(+). Its function is as follows. Specifically dimethylates two adjacent adenosines (A1518 and A1519) in the loop of a conserved hairpin near the 3'-end of 16S rRNA in the 30S particle. May play a critical role in biogenesis of 30S subunits. In Rhodopseudomonas palustris (strain BisA53), this protein is Ribosomal RNA small subunit methyltransferase A.